Consider the following 658-residue polypeptide: MTQLAIGEATPHGATYDGHGVNFTLFSAHAERVELCVFDSRGNERRYDLPGRRGDVWHGYLAGARPGLRYGYRVHGPWQPAQGHRFNPAKLLLDPYARRVEGELKDHPLLHGGHDEPDYRDNAAVAPKSVVISDHYDWEDDAAPRTPWGKTVIYEAHVKGLTYLHPELPQEIRGTYKALGHPVMVAYFKQLGITALELLPVAQFASEPRLQRMGLTNYWGYNPMAMFALHPAWASSPETALDEFRDAVKALHRAGIEVILDIVLNHSAELDLDGPTFSLRGIDNRSYYWIRDDGDYHNWTGCGNTLNLSHPGVVEYACECLRYWVETCHVDGFRFDLASVMGRTPTFRQDAPLFAAIKACPVLSTVKLIAEPWDIGEGGYQVGNFPPPFAEWNDHFRDAARRFWLPRNLTTGEFACRFAASSDVFKRNGRAPGASVNLLTAHDGFTLRDCVCFNQKHNEANGEENRDGTNSNYSDNHGKEGLGGPLDLMERRRDSIHALLATLLLSQGTPMLLAGDEHGHSQHGNNNAYCQDNALTWLDWQQANRGLTTFTAALIRLRQQIPALTGNSWWEEGDGNVRWLNKNAQPLSADEWQNGPKLMQILLSDRFLIAINATLEVTDIVLPEGEWRAVPPFAGEDNPVITAVWQGPAHGLCVFQRG.

The active-site Nucleophile is aspartate 336. The active-site Proton donor is the glutamate 371. Positions 459–484 (EANGEENRDGTNSNYSDNHGKEGLGG) are disordered.

The protein belongs to the glycosyl hydrolase 13 family.

It carries out the reaction Hydrolysis of (1-&gt;6)-alpha-D-glucosidic linkages to branches with degrees of polymerization of three or four glucose residues in limit dextrin.. The protein operates within glycan degradation; glycogen degradation. Removes maltotriose and maltotetraose chains that are attached by 1,6-alpha-linkage to the limit dextrin main chain, generating a debranched limit dextrin. This Salmonella choleraesuis (strain SC-B67) protein is Glycogen debranching enzyme.